Consider the following 687-residue polypeptide: Putative secreted metallopeptidase (687 aa).

An N-terminal signal peptide occupies residues Met1–Ala22. Asn54, Asn114, Asn252, Asn256, and Asn379 each carry an N-linked (GlcNAc...) asparagine glycan.

Belongs to the peptidase M10B family.

It localises to the secreted. The sequence is that of Putative secreted metallopeptidase from Arthroderma benhamiae (strain ATCC MYA-4681 / CBS 112371) (Trichophyton mentagrophytes).